The primary structure comprises 115 residues: NAD(P)H-quinone oxidoreductase subunit M (115 aa).

This sequence belongs to the complex I NdhM subunit family. In terms of assembly, NDH-1 can be composed of about 15 different subunits; different subcomplexes with different compositions have been identified which probably have different functions.

It localises to the cellular thylakoid membrane. It catalyses the reaction a plastoquinone + NADH + (n+1) H(+)(in) = a plastoquinol + NAD(+) + n H(+)(out). The enzyme catalyses a plastoquinone + NADPH + (n+1) H(+)(in) = a plastoquinol + NADP(+) + n H(+)(out). Its function is as follows. NDH-1 shuttles electrons from an unknown electron donor, via FMN and iron-sulfur (Fe-S) centers, to quinones in the respiratory and/or the photosynthetic chain. The immediate electron acceptor for the enzyme in this species is believed to be plastoquinone. Couples the redox reaction to proton translocation, and thus conserves the redox energy in a proton gradient. Cyanobacterial NDH-1 also plays a role in inorganic carbon-concentration. In Synechococcus sp. (strain CC9605), this protein is NAD(P)H-quinone oxidoreductase subunit M.